The sequence spans 470 residues: MTLTTRFAPSPTGYLHVGGARTALYSWLYAKKNGGDFILRIEDTDLERSTQASVDAIMDGMNWLNLEWTHGPYFQTERFDRYNEAIEQLIASGNAYRCYSTSEEVDAMREEAKAKGEIEKYNGLWRDRTDHPADKPFVIRFKNPLEGDVIIKDMVKGDIAISNGQLDDLIIARSDGTPTYNLTVVVDDWDMKVSHVVRGDDHVSNTPKQINILRALGADVPQYAHIPMILGDDGKRLSKRHGAVGVMQYRDDGFLPEALLNYLVRLGWSHGDQEIFSREEMIELFDLKDCNRAPSGFNTDKLIWVNQHYMKTMDPAYVAEHLAWHMADQGINTENGPALADVVRIQADRVKTLKEMADISRYFYEDFTELDAKAVKKHLRPVVKEPMILVKEKLAALTDWSPEPIHAAINDTAVELELGMGKVGMPLRVAATGGGNSPSLDITLALLDQSKVIERIEQALVVVEARIAAG.

The 'HIGH' region signature appears at P9 to G19. The 'KMSKS' region signature appears at R236–R240. Residue K239 participates in ATP binding.

It belongs to the class-I aminoacyl-tRNA synthetase family. Glutamate--tRNA ligase type 1 subfamily. In terms of assembly, monomer.

It is found in the cytoplasm. The enzyme catalyses tRNA(Glu) + L-glutamate + ATP = L-glutamyl-tRNA(Glu) + AMP + diphosphate. In terms of biological role, catalyzes the attachment of glutamate to tRNA(Glu) in a two-step reaction: glutamate is first activated by ATP to form Glu-AMP and then transferred to the acceptor end of tRNA(Glu). This is Glutamate--tRNA ligase from Colwellia psychrerythraea (strain 34H / ATCC BAA-681) (Vibrio psychroerythus).